Here is a 215-residue protein sequence, read N- to C-terminus: Adenylate kinase (215 aa).

Position 10 to 15 (10 to 15 (GAGKGT)) interacts with ATP. The interval 30-59 (STGDMFRAAIKEGTELGKQAKALMDQGKLV) is NMP. Residues T31, R36, 57 to 59 (KLV), 85 to 88 (GFPR), and Q92 each bind AMP. The tract at residues 122 to 159 (GRRVHQPSGRTYHIIYNPPKVAGQDDITGEELITRADD) is LID. Residues R123 and 132 to 133 (TY) each bind ATP. The AMP site is built by R156 and R167. An ATP-binding site is contributed by K200.

Belongs to the adenylate kinase family. As to quaternary structure, monomer.

Its subcellular location is the cytoplasm. It carries out the reaction AMP + ATP = 2 ADP. It participates in purine metabolism; AMP biosynthesis via salvage pathway; AMP from ADP: step 1/1. Functionally, catalyzes the reversible transfer of the terminal phosphate group between ATP and AMP. Plays an important role in cellular energy homeostasis and in adenine nucleotide metabolism. This is Adenylate kinase from Haemophilus ducreyi (strain 35000HP / ATCC 700724).